The following is a 173-amino-acid chain: Large ribosomal subunit protein uL10 (173 aa).

This sequence belongs to the universal ribosomal protein uL10 family. In terms of assembly, part of the ribosomal stalk of the 50S ribosomal subunit. The N-terminus interacts with L11 and the large rRNA to form the base of the stalk. The C-terminus forms an elongated spine to which L12 dimers bind in a sequential fashion forming a multimeric L10(L12)X complex.

Forms part of the ribosomal stalk, playing a central role in the interaction of the ribosome with GTP-bound translation factors. The polypeptide is Large ribosomal subunit protein uL10 (Cupriavidus metallidurans (strain ATCC 43123 / DSM 2839 / NBRC 102507 / CH34) (Ralstonia metallidurans)).